We begin with the raw amino-acid sequence, 260 residues long: MIIVLSPAKSLDYETPPHVSHHTQPQFADDAAALIDELRRLSPQQIGTLMSISDPLARLNFQRYADWSRASTPANAKQAVLAFNGDVYEGLDARSLSPDDLDYAQRHVRVLSGLYGLLRPLDLLQPYRLEMGTRFSNARGKDLYAFWGERITHALNAELKTRVGASRVLVNCASAEYFKSVKPKLLDARVVTPVFEDWKDGRYKIISFHAKRARGLMARYVVEGRIDSPDALKDFASEGYAFDASASNDDTYVFRRRAGA.

It belongs to the UPF0246 family.

The chain is UPF0246 protein BURPS668_1321 from Burkholderia pseudomallei (strain 668).